A 220-amino-acid chain; its full sequence is Octanoyltransferase (220 aa).

The 181-residue stretch at 31–211 (GTAADHLLLL…HFARIFDFEM (181 aa)) folds into the BPL/LPL catalytic domain. Substrate is bound by residues 76-83 (RGGDVTYH), 143-145 (AIG), and 156-158 (GFA). The active-site Acyl-thioester intermediate is cysteine 174.

The protein belongs to the LipB family.

It is found in the cytoplasm. It catalyses the reaction octanoyl-[ACP] + L-lysyl-[protein] = N(6)-octanoyl-L-lysyl-[protein] + holo-[ACP] + H(+). Its pathway is protein modification; protein lipoylation via endogenous pathway; protein N(6)-(lipoyl)lysine from octanoyl-[acyl-carrier-protein]: step 1/2. In terms of biological role, catalyzes the transfer of endogenously produced octanoic acid from octanoyl-acyl-carrier-protein onto the lipoyl domains of lipoate-dependent enzymes. Lipoyl-ACP can also act as a substrate although octanoyl-ACP is likely to be the physiological substrate. The protein is Octanoyltransferase of Solibacter usitatus (strain Ellin6076).